The chain runs to 135 residues: uncharacterized protein (135 aa).

This is an uncharacterized protein from Aquifex aeolicus (strain VF5).